Here is a 287-residue protein sequence, read N- to C-terminus: Nucleotide-binding protein VP2673 (287 aa).

ATP is bound at residue 8 to 15; sequence GHSGAGKS. A GTP-binding site is contributed by 56–59; it reads DIRN.

It belongs to the RapZ-like family.

In terms of biological role, displays ATPase and GTPase activities. The chain is Nucleotide-binding protein VP2673 from Vibrio parahaemolyticus serotype O3:K6 (strain RIMD 2210633).